The chain runs to 477 residues: Phosphomethylpyrimidine synthase (477 aa).

Substrate-binding positions include Asn67, Met96, Tyr125, His160, 180 to 182 (SRG), 221 to 224 (DGLR), and Glu260. His264 provides a ligand contact to Zn(2+). Tyr287 serves as a coordination point for substrate. His328 contacts Zn(2+). The [4Fe-4S] cluster site is built by Cys408, Cys411, and Cys416. The segment covering 427 to 440 (AGDGMDGLESRTDL) has biased composition (basic and acidic residues). The tract at residues 427-477 (AGDGMDGLESRTDLDSSAAAAVNRPPTGVHRAEKLDDIPCPVAEDDVAADD) is disordered.

Belongs to the ThiC family. [4Fe-4S] cluster is required as a cofactor.

The catalysed reaction is 5-amino-1-(5-phospho-beta-D-ribosyl)imidazole + S-adenosyl-L-methionine = 4-amino-2-methyl-5-(phosphooxymethyl)pyrimidine + CO + 5'-deoxyadenosine + formate + L-methionine + 3 H(+). It functions in the pathway cofactor biosynthesis; thiamine diphosphate biosynthesis. In terms of biological role, catalyzes the synthesis of the hydroxymethylpyrimidine phosphate (HMP-P) moiety of thiamine from aminoimidazole ribotide (AIR) in a radical S-adenosyl-L-methionine (SAM)-dependent reaction. The chain is Phosphomethylpyrimidine synthase from Natronomonas pharaonis (strain ATCC 35678 / DSM 2160 / CIP 103997 / JCM 8858 / NBRC 14720 / NCIMB 2260 / Gabara) (Halobacterium pharaonis).